Here is a 361-residue protein sequence, read N- to C-terminus: Peptide chain release factor 1 (361 aa).

Gln-235 bears the N5-methylglutamine mark. The segment at Ala-288 to Ile-307 is disordered.

This sequence belongs to the prokaryotic/mitochondrial release factor family. Post-translationally, methylated by PrmC. Methylation increases the termination efficiency of RF1.

It localises to the cytoplasm. In terms of biological role, peptide chain release factor 1 directs the termination of translation in response to the peptide chain termination codons UAG and UAA. This Nitrobacter hamburgensis (strain DSM 10229 / NCIMB 13809 / X14) protein is Peptide chain release factor 1.